Consider the following 232-residue polypeptide: Small ribosomal subunit protein uS3 (232 aa).

The 69-residue stretch at isoleucine 39–arginine 107 folds into the KH type-2 domain. The disordered stretch occupies residues valine 212–lysine 232. The span at glutamine 213–lysine 223 shows a compositional bias: basic and acidic residues.

Belongs to the universal ribosomal protein uS3 family. As to quaternary structure, part of the 30S ribosomal subunit. Forms a tight complex with proteins S10 and S14.

In terms of biological role, binds the lower part of the 30S subunit head. Binds mRNA in the 70S ribosome, positioning it for translation. This chain is Small ribosomal subunit protein uS3, found in Campylobacter curvus (strain 525.92).